Reading from the N-terminus, the 301-residue chain is Glycine--tRNA ligase alpha subunit (301 aa).

The protein belongs to the class-II aminoacyl-tRNA synthetase family. In terms of assembly, tetramer of two alpha and two beta subunits.

It localises to the cytoplasm. It carries out the reaction tRNA(Gly) + glycine + ATP = glycyl-tRNA(Gly) + AMP + diphosphate. The polypeptide is Glycine--tRNA ligase alpha subunit (Shewanella frigidimarina (strain NCIMB 400)).